The following is a 315-amino-acid chain: Ornithine carbamoyltransferase, anabolic (315 aa).

Carbamoyl phosphate-binding positions include 57–60 (STRT), Q84, R108, and 135–138 (HPCQ). L-ornithine contacts are provided by residues N166, D230, and 234 to 235 (SM). Carbamoyl phosphate is bound by residues 270-271 (CL) and R298.

Belongs to the aspartate/ornithine carbamoyltransferase superfamily. OTCase family. Homododecamer (tetramer of trimers).

It is found in the cytoplasm. The catalysed reaction is carbamoyl phosphate + L-ornithine = L-citrulline + phosphate + H(+). It functions in the pathway amino-acid biosynthesis; L-arginine biosynthesis; L-arginine from L-ornithine and carbamoyl phosphate: step 1/3. Inhibited by the bisubstrate delta-N-phosphonoacetyl-L-ornithine (PALO). Reversibly catalyzes the transfer of the carbamoyl group from carbamoyl phosphate (CP) to the N(epsilon) atom of ornithine (ORN) to produce L-citrulline, which is a substrate for argininosuccinate synthetase, the enzyme involved in the final step in arginine biosynthesis. In Pyrococcus furiosus (strain ATCC 43587 / DSM 3638 / JCM 8422 / Vc1), this protein is Ornithine carbamoyltransferase, anabolic.